Consider the following 278-residue polypeptide: Small ribosomal subunit protein uS2 (278 aa).

Residues 235 to 278 form a disordered region; that stretch reads QRRKDHGEGGQQAAGGGRGQRDEINVYQGGRGGRGGGPRQQQAS. Composition is skewed to gly residues over residues 243–252 and 263–272; these read GGQQAAGGGR and GGRGGRGGGP.

It belongs to the universal ribosomal protein uS2 family.

The protein is Small ribosomal subunit protein uS2 of Sorangium cellulosum (strain So ce56) (Polyangium cellulosum (strain So ce56)).